The chain runs to 346 residues: D-alanine--D-alanine ligase (346 aa).

Residues 133-327 (KLYAKSVGVK…ALADQISLEK (195 aa)) enclose the ATP-grasp domain. An ATP-binding site is contributed by 159-211 (LSFPCIIKPARLGSSIGISIVKDEKDLEYAKDVGFEFDNDLVVEEFKNNIKEY). 3 residues coordinate Mg(2+): Asp284, Glu296, and Asn298.

It belongs to the D-alanine--D-alanine ligase family. Mg(2+) serves as cofactor. It depends on Mn(2+) as a cofactor.

Its subcellular location is the cytoplasm. It carries out the reaction 2 D-alanine + ATP = D-alanyl-D-alanine + ADP + phosphate + H(+). Its pathway is cell wall biogenesis; peptidoglycan biosynthesis. Cell wall formation. This chain is D-alanine--D-alanine ligase, found in Campylobacter jejuni subsp. jejuni serotype O:23/36 (strain 81-176).